A 313-amino-acid polypeptide reads, in one-letter code: Porphobilinogen deaminase (313 aa).

Cys-242 carries the post-translational modification S-(dipyrrolylmethanemethyl)cysteine.

It belongs to the HMBS family. As to quaternary structure, monomer. The cofactor is dipyrromethane.

It carries out the reaction 4 porphobilinogen + H2O = hydroxymethylbilane + 4 NH4(+). The protein operates within porphyrin-containing compound metabolism; protoporphyrin-IX biosynthesis; coproporphyrinogen-III from 5-aminolevulinate: step 2/4. Functionally, tetrapolymerization of the monopyrrole PBG into the hydroxymethylbilane pre-uroporphyrinogen in several discrete steps. This chain is Porphobilinogen deaminase, found in Yersinia pestis bv. Antiqua (strain Angola).